A 465-amino-acid polypeptide reads, in one-letter code: Putrescine aminotransferase (465 aa).

Pyridoxal 5'-phosphate-binding positions include 150–151 (GT) and Gln274. Lys300 bears the N6-(pyridoxal phosphate)lysine mark. Thr332 is a binding site for pyridoxal 5'-phosphate.

This sequence belongs to the class-III pyridoxal-phosphate-dependent aminotransferase family. Putrescine aminotransferase subfamily. Requires pyridoxal 5'-phosphate as cofactor.

The catalysed reaction is an alkane-alpha,omega-diamine + 2-oxoglutarate = an omega-aminoaldehyde + L-glutamate. It carries out the reaction putrescine + 2-oxoglutarate = 1-pyrroline + L-glutamate + H2O. The enzyme catalyses cadaverine + 2-oxoglutarate = 5-aminopentanal + L-glutamate. Its pathway is amine and polyamine degradation; putrescine degradation; 4-aminobutanal from putrescine (transaminase route): step 1/1. In terms of biological role, catalyzes the aminotransferase reaction from putrescine to 2-oxoglutarate, leading to glutamate and 4-aminobutanal, which spontaneously cyclizes to form 1-pyrroline. This is the first step in one of two pathways for putrescine degradation, where putrescine is converted into 4-aminobutanoate (gamma-aminobutyrate or GABA) via 4-aminobutanal. Also functions as a cadaverine transaminase in a a L-lysine degradation pathway to succinate that proceeds via cadaverine, glutarate and L-2-hydroxyglutarate. In Cronobacter sakazakii (strain ATCC BAA-894) (Enterobacter sakazakii), this protein is Putrescine aminotransferase.